Reading from the N-terminus, the 489-residue chain is MTFRNCVAVDLGASSGRVMLARYERECRSLTLREIHRFKNGLHSQNGYVTWNVDSLESAIRLGLNKVCEEGIRIDSIGIDTWGVDFVLLDQQGQRVGLPVAYRDSRTNGLMAQAQQQLGKRDIYQRSGIQFLPFNTLYQLRALTEQQPELIPHIAHALLMPDYFSYRLTGKMNWEYTNATTTQLVNINSDDWDESLLAWSGANKAWFGRPTHPGNVIGHWICPQGNEIPVVAVASHDTASAVIASPLNGSRAAYLSSGTWSLMGFESQTPFTNDTALAANITNEGGAEGRYRVLKNIMGLWLLQRVLQERQINDLPALIAATQALPACRFIINPNDDRFINPEAMCSEIQAACRETAQPIPESDAELARCIFDSLALLYADVLHELAQLRGEDFSQLHIVGGGCQNTLLNQLCADACGIRVIAGPVEASTLGNIGIQLMTLDELNNVDDFRQVVSTTANLTTFTPNPDSEIAHYVAQIHSTRQTKELCA.

Residue 13–17 (ASSGR) coordinates ATP. An intrachain disulfide couples C68 to C222. Substrate is bound by residues G83 and 236–238 (HDT). Residue D237 is the Proton acceptor of the active site. Residue T259 participates in ATP binding. N296 serves as a coordination point for substrate. Q304 contributes to the ATP binding site. C353 and C370 form a disulfide bridge. G402 lines the ATP pocket. C413 and C417 are joined by a disulfide.

The protein belongs to the rhamnulokinase family. As to quaternary structure, monomer. Mg(2+) serves as cofactor.

It catalyses the reaction L-rhamnulose + ATP = L-rhamnulose 1-phosphate + ADP + H(+). Its pathway is carbohydrate degradation; L-rhamnose degradation; glycerone phosphate from L-rhamnose: step 2/3. Functionally, involved in the catabolism of L-rhamnose (6-deoxy-L-mannose). Catalyzes the transfer of the gamma-phosphate group from ATP to the 1-hydroxyl group of L-rhamnulose to yield L-rhamnulose 1-phosphate. This chain is Rhamnulokinase, found in Escherichia coli (strain SE11).